Reading from the N-terminus, the 375-residue chain is Histidine biosynthesis bifunctional protein HisB (375 aa).

Residues 1 to 168 form a histidinol-phosphatase region; sequence MTPILFVDRD…GIAHELADAP (168 aa). Aspartate 8 serves as the catalytic Nucleophile. 3 residues coordinate Mg(2+): aspartate 8, aspartate 10, and aspartate 128. Aspartate 10 serves as the catalytic Proton donor. The segment at 169–375 is imidazoleglycerol-phosphate dehydratase; sequence RRALVQRNTK…TALPTTKGTL (207 aa).

This sequence in the N-terminal section; belongs to the histidinol-phosphatase family. The protein in the C-terminal section; belongs to the imidazoleglycerol-phosphate dehydratase family. Mg(2+) serves as cofactor.

The protein localises to the cytoplasm. It catalyses the reaction D-erythro-1-(imidazol-4-yl)glycerol 3-phosphate = 3-(imidazol-4-yl)-2-oxopropyl phosphate + H2O. The catalysed reaction is L-histidinol phosphate + H2O = L-histidinol + phosphate. The protein operates within amino-acid biosynthesis; L-histidine biosynthesis; L-histidine from 5-phospho-alpha-D-ribose 1-diphosphate: step 6/9. Its pathway is amino-acid biosynthesis; L-histidine biosynthesis; L-histidine from 5-phospho-alpha-D-ribose 1-diphosphate: step 8/9. The sequence is that of Histidine biosynthesis bifunctional protein HisB from Xanthomonas axonopodis pv. citri (strain 306).